We begin with the raw amino-acid sequence, 161 residues long: Regulator of ribonuclease activity A (161 aa).

Belongs to the RraA family. As to quaternary structure, homotrimer. Binds to both RNA-binding sites in the C-terminal region of Rne and to RhlB.

It is found in the cytoplasm. In terms of biological role, globally modulates RNA abundance by binding to RNase E (Rne) and regulating its endonucleolytic activity. Can modulate Rne action in a substrate-dependent manner by altering the composition of the degradosome. Modulates RNA-binding and helicase activities of the degradosome. This Yersinia enterocolitica serotype O:8 / biotype 1B (strain NCTC 13174 / 8081) protein is Regulator of ribonuclease activity A.